Reading from the N-terminus, the 301-residue chain is Recombination-associated protein RdgC (301 aa).

The protein belongs to the RdgC family.

The protein resides in the cytoplasm. The protein localises to the nucleoid. Functionally, may be involved in recombination. The chain is Recombination-associated protein RdgC from Stenotrophomonas maltophilia (strain R551-3).